Here is a 488-residue protein sequence, read N- to C-terminus: Ribulose bisphosphate carboxylase large chain (488 aa).

Residues asparagine 127 and threonine 177 each contribute to the substrate site. The Proton acceptor role is filled by lysine 179. Position 181 (lysine 181) interacts with substrate. The Mg(2+) site is built by lysine 205, aspartate 207, and glutamate 208. Residue lysine 205 is modified to N6-carboxylysine. Residue histidine 297 is the Proton acceptor of the active site. Substrate is bound by residues arginine 298, histidine 330, and serine 382.

Belongs to the RuBisCO large chain family. Type I subfamily. Heterohexadecamer of 8 large chains and 8 small chains. Requires Mg(2+) as cofactor.

It localises to the plastid. The protein resides in the chloroplast. The catalysed reaction is 2 (2R)-3-phosphoglycerate + 2 H(+) = D-ribulose 1,5-bisphosphate + CO2 + H2O. The enzyme catalyses D-ribulose 1,5-bisphosphate + O2 = 2-phosphoglycolate + (2R)-3-phosphoglycerate + 2 H(+). Functionally, ruBisCO catalyzes two reactions: the carboxylation of D-ribulose 1,5-bisphosphate, the primary event in carbon dioxide fixation, as well as the oxidative fragmentation of the pentose substrate in the photorespiration process. Both reactions occur simultaneously and in competition at the same active site. This is Ribulose bisphosphate carboxylase large chain from Pylaiella littoralis (Seaweed).